The primary structure comprises 476 residues: Dihydrolipoyl dehydrogenase (476 aa).

Residues 36–45 (EHQERLGGVC), K54, and A117 each bind FAD. Residues C45 and C50 are joined by a disulfide bond. NAD(+) is bound by residues 182–186 (GGGII), D205, V238, and 271–274 (AIGR). FAD-binding residues include D314 and A322. H446 acts as the Proton acceptor in catalysis.

Belongs to the class-I pyridine nucleotide-disulfide oxidoreductase family. As to quaternary structure, homodimer. Requires FAD as cofactor.

Its subcellular location is the cytoplasm. It catalyses the reaction N(6)-[(R)-dihydrolipoyl]-L-lysyl-[protein] + NAD(+) = N(6)-[(R)-lipoyl]-L-lysyl-[protein] + NADH + H(+). Lipoamide dehydrogenase is a component of the alpha-ketoacid dehydrogenase complexes. The sequence is that of Dihydrolipoyl dehydrogenase (lpdA) from Buchnera aphidicola subsp. Schizaphis graminum (strain Sg).